The following is a 244-amino-acid chain: Probable metallo-hydrolase YhfI (244 aa).

7 residues coordinate Zn(2+): His59, His61, Asp63, His64, His134, Asp155, and His211.

Belongs to the metallo-beta-lactamase superfamily. Zn(2+) serves as cofactor.

This is Probable metallo-hydrolase YhfI (yhfI) from Bacillus subtilis (strain 168).